We begin with the raw amino-acid sequence, 456 residues long: Dothistromin biosynthesis regulatory protein aflJ (456 aa).

Residues 74–143 (LARENQLLAC…PKPGYVAHSG (70 aa)) form the HTH iclR-type domain. The segment at residues 104–123 (YSDVADLACVPVDQLRRIAR) is a DNA-binding region (H-T-H motif). Residues 290 to 300 (KLHNGLSTPPE) are compositionally biased toward polar residues. The disordered stretch occupies residues 290 to 314 (KLHNGLSTPPESDTGPAARAAKASE).

It localises to the nucleus. In terms of biological role, transcription coactivator involved in regulation of the dothistromin biosynthesis gene cluster with aflR. This is Dothistromin biosynthesis regulatory protein aflJ from Dothistroma septosporum (strain NZE10 / CBS 128990) (Red band needle blight fungus).